We begin with the raw amino-acid sequence, 1458 residues long: ABC multidrug transporter B (1458 aa).

Transmembrane regions (helical) follow at residues 30 to 50 (FSLL…VLII), 70 to 90 (LLWA…VLAV), 102 to 122 (ASIA…LLSC), 128 to 148 (STTP…FDIA), and 165 to 185 (IAIL…LEAV). Asn208 carries N-linked (GlcNAc...) asparagine glycosylation. A helical transmembrane segment spans residues 273–295 (WPLLSAVPPRACLAALNFCQPLL). Positions 283–561 (ACLAALNFCQ…LVMALMTFVG (279 aa)) constitute an ABC transmembrane type-1 1 domain. Asn309 is a glycosylation site (N-linked (GlcNAc...) asparagine). A run of 5 helical transmembrane segments spans residues 314-334 (IGYG…VTMG), 387-407 (WQTI…IYLL), 411-431 (LGVA…GCLI), 501-521 (LGWT…YGIM), and 541-561 (LFAL…TFVG). Residues 626–853 (LTVKNATFAW…AGGYVSSFGL (228 aa)) enclose the ABC transporter 1 domain. N-linked (GlcNAc...) asparagine glycosylation is present at Asn630. Residue 660-667 (GPSGCGKS) participates in ATP binding. Residues Asn702, Asn804, and Asn879 are each glycosylated (N-linked (GlcNAc...) asparagine). The ABC transmembrane type-1 2 domain maps to 933–1182 (PNGRTGYYLG…LVTFWTNLET (250 aa)). 6 helical membrane-spanning segments follow: residues 940–960 (YLGI…IGCW), 978–998 (LLAT…SGSI), 1016–1036 (AAIN…LMGI), 1040–1060 (YAAI…KVYL), 1125–1145 (LTLT…VLVV), and 1156–1176 (VGVA…LVTF). One can recognise an ABC transporter 2 domain in the interval 1219–1449 (IEFKSVSAEY…EGSYFSRLYA (231 aa)). 1252–1259 (GRTGSGKT) is an ATP binding site. Asn1316 carries an N-linked (GlcNAc...) asparagine glycan.

The protein belongs to the ABC transporter superfamily. ABCC family. Conjugate transporter (TC 3.A.1.208) subfamily.

Its subcellular location is the cell membrane. Its function is as follows. Pleiotropic ABC efflux transporter that may be involved in A.fumigatus adaptation to azoles such as vorizonazole. The chain is ABC multidrug transporter B from Aspergillus fumigatus (strain ATCC MYA-4609 / CBS 101355 / FGSC A1100 / Af293) (Neosartorya fumigata).